A 127-amino-acid polypeptide reads, in one-letter code: Chondrosarcoma-associated gene 2/3 protein (127 aa).

The disordered stretch occupies residues Met68–Pro127.

In terms of tissue distribution, weakly expressed in kidney. Expressed in various tumor cell lines including carcinomas, myeloid and lymphoid malignancies, melanomas and prostate cancer. Overexpressed in taxol-resistant breast cancer line MDA 435TR and the doxorubicin-resistant multiple myelanoma lines RPMI-8226/Dox40 and RPMI-8226/MDR10V.

Its function is as follows. Drug-resistance related protein, its expression is associated with the chemotherapy resistant and neoplastic phenotype. May also be linked to the malignant phenotype. The protein is Chondrosarcoma-associated gene 2/3 protein (CSAG2) of Homo sapiens (Human).